A 176-amino-acid chain; its full sequence is MSAGGAPVPPPPNPAMSFPAPRVTLPAGPDILRTYSGAFVCLEIVFGGLVWILVASSNVPLPLLQGWVMFVSVTAFVCSLLFLGVFLSGVVTQINANWNFLDFAYHFTVFVFYFGAFLLEAATTSLHDLRCNRTMTVQPLLSDNQYNINVAATIFAFVTTACYGCSLGLALRRWRP.

The Cytoplasmic portion of the chain corresponds to 1-34 (MSAGGAPVPPPPNPAMSFPAPRVTLPAGPDILRT). The 145-residue stretch at 31-175 (ILRTYSGAFV…SLGLALRRWR (145 aa)) folds into the MARVEL domain. Residues 35 to 55 (YSGAFVCLEIVFGGLVWILVA) traverse the membrane as a helical segment. Over 56-66 (SSNVPLPLLQG) the chain is Lumenal. The helical transmembrane segment at 67–87 (WVMFVSVTAFVCSLLFLGVFL) threads the bilayer. Over 88-102 (SGVVTQINANWNFLD) the chain is Cytoplasmic. Residues 103 to 123 (FAYHFTVFVFYFGAFLLEAAT) traverse the membrane as a helical segment. Over 124–149 (TSLHDLRCNRTMTVQPLLSDNQYNIN) the chain is Lumenal. N-linked (GlcNAc...) asparagine glycosylation is present at Asn132. The helical transmembrane segment at 150–170 (VAATIFAFVTTACYGCSLGLA) threads the bilayer. At 171-176 (LRRWRP) the chain is on the cytoplasmic side.

The protein belongs to the MAL family. In terms of assembly, interacts with TPD52L2.

Its subcellular location is the cell membrane. The protein resides in the apical cell membrane. Member of the machinery of polarized transport. Required for the indirect transcytotic route at the step of the egress of the transcytosing cargo from perinuclear endosomes in order for it to travel to the apical surface via a raft-dependent pathway. This Bos taurus (Bovine) protein is Protein MAL2 (MAL2).